The primary structure comprises 470 residues: UDP-N-acetylmuramoylalanine--D-glutamate ligase (470 aa).

Position 120-126 (120-126 (GSNGKTT)) interacts with ATP.

Belongs to the MurCDEF family.

It localises to the cytoplasm. The enzyme catalyses UDP-N-acetyl-alpha-D-muramoyl-L-alanine + D-glutamate + ATP = UDP-N-acetyl-alpha-D-muramoyl-L-alanyl-D-glutamate + ADP + phosphate + H(+). It participates in cell wall biogenesis; peptidoglycan biosynthesis. In terms of biological role, cell wall formation. Catalyzes the addition of glutamate to the nucleotide precursor UDP-N-acetylmuramoyl-L-alanine (UMA). In Nitrosomonas eutropha (strain DSM 101675 / C91 / Nm57), this protein is UDP-N-acetylmuramoylalanine--D-glutamate ligase.